Reading from the N-terminus, the 558-residue chain is Alpha-1,3-mannosyltransferase MNT2 (558 aa).

The Cytoplasmic portion of the chain corresponds to 1-6; the sequence is MRRKNR. Residues 7–27 form a helical; Signal-anchor for type II membrane protein membrane-spanning segment; that stretch reads LFILVVLLGIVLVVYYSQLNS. At 28-558 the chain is on the lumenal side; it reads LDLVEPVQSS…QIVDIWNKDI (531 aa). N-linked (GlcNAc...) asparagine glycosylation occurs at N187.

This sequence belongs to the MNN1/MNT family.

The protein resides in the golgi apparatus membrane. It functions in the pathway protein modification; protein glycosylation. Functionally, mannosyltransferase involved in adding the 4th and 5th mannose residues of O-linked glycans. This chain is Alpha-1,3-mannosyltransferase MNT2 (MNT2), found in Saccharomyces cerevisiae (strain ATCC 204508 / S288c) (Baker's yeast).